The sequence spans 579 residues: Folliculin (579 aa).

The tract at residues 30–81 (PQGDGNEDSPGQGEQAEEEEGGIQMNSRMRAHSPAEGASVESSSPGPKKSDM) is disordered. Serine 62 and serine 73 each carry phosphoserine. Residues 86–242 (RSLAAGHPGY…RNGNAARSLT (157 aa)) enclose the uDENN FLCN/SMCR8-type domain. Residues 210-220 (AEQFGCPQRAQ) form an essential for interaction with LDHA region. Residues 287–310 (EKLADLEEESESWDNSEAEEEEKA) adopt a coiled-coil conformation. Positions 294–308 (EESESWDNSEAEEEE) are enriched in acidic residues. Residues 294 to 337 (EESESWDNSEAEEEEKAPVLPESTEGRELTQGPAESSSLSGCGS) form a disordered region. Phosphoserine is present on serine 302. The span at 326-336 (PAESSSLSGCG) shows a compositional bias: polar residues. One can recognise a cDENN FLCN/SMCR8-type domain in the interval 339–491 (QPRKLPVFKS…ILNKIEAALT (153 aa)). Residues serine 406, serine 537, and serine 542 each carry the phosphoserine; by ULK1 modification. Residues 493-558 (QNLSVDVVDQ…LLKFWMTGLS (66 aa)) enclose the dDENN FLCN/SMCR8-type domain. At serine 571 the chain carries Phosphoserine.

Belongs to the folliculin family. As to quaternary structure, interacts (via C-terminus) with FNIP1 or FNIP2 (via C-terminus). Component of the lysosomal folliculin complex (LFC), composed of FLCN, FNIP1 (or FNIP2), RagA/RRAGA or RagB/RRAGB GDP-bound, RagC/RRAGC or RagD/RRAGD GTP-bound, and Ragulator. Interaction with FNIP1 or FNIP2 mediates indirect interaction with the PRKAA1, PRKAB1 and PRKAG1 subunits of 5'-AMP-activated protein kinase (AMPK). Interacts with HSP90AA1 in the presence of FNIP1. Interacts with HSP70, STUB1, CDC37, AHSA1, CCT2, STIP1, PTGES3 and PPP5C. Interacts with GABARAP; interaction takes place in the presence of FNIP1 and/or FNIP2. Interacts with RILP; the interaction is direct and promotes association between RILP and RAB34. Interacts with KIF3A and KIF3B. Interacts with lactate dehydrogenase LDHA, but not LDHB; the interaction is direct, may preferentially bind LDHA dimers rather than tetramers, and regulates LDHA activity, acting as an uncompetitive inhibitor. In terms of processing, phosphorylation by ULK1 modulates the interaction with GABARAP and is required to regulate autophagy. Expressed in most tissues tested, including skin, lung, kidney, heart, testis and stomach.

It localises to the lysosome membrane. It is found in the cytoplasm. The protein localises to the cytosol. The protein resides in the cell projection. Its subcellular location is the cilium. It localises to the cytoskeleton. It is found in the microtubule organizing center. The protein localises to the centrosome. The protein resides in the spindle. Its subcellular location is the nucleus. With respect to regulation, GTPase-activating activity is inhibited in the folliculin complex (LFC), which stabilizes the GDP-bound state of RagA/RRAGA (or RagB/RRAGB), because Arg-164 is located far from the RagC/RRAGC or RagD/RRAGD nucleotide pocket. Disassembly of the LFC complex upon amino acid restimulation liberates the GTPase-activating activity. Its function is as follows. Multi-functional protein, involved in both the cellular response to amino acid availability and in the regulation of glycolysis. GTPase-activating protein that plays a key role in the cellular response to amino acid availability through regulation of the non-canonical mTORC1 signaling cascade controlling the MiT/TFE factors TFEB and TFE3. Activates mTORC1 by acting as a GTPase-activating protein: specifically stimulates GTP hydrolysis by RagC/RRAGC or RagD/RRAGD, promoting the conversion to the GDP-bound state of RagC/RRAGC or RagD/RRAGD, and thereby activating the kinase activity of mTORC1. The GTPase-activating activity is inhibited during starvation and activated in presence of nutrients. Acts as a key component for non-canonical mTORC1-dependent control of the MiT/TFE factors TFEB and TFE3, while it is not involved in mTORC1-dependent phosphorylation of canonical RPS6KB1/S6K1 and EIF4EBP1/4E-BP1. In low-amino acid conditions, the lysosomal folliculin complex (LFC) is formed on the membrane of lysosomes, which inhibits the GTPase-activating activity of FLCN, inactivates mTORC1 and maximizes nuclear translocation of TFEB and TFE3. Upon amino acid restimulation, RagA/RRAGA (or RagB/RRAGB) nucleotide exchange promotes disassembly of the LFC complex and liberates the GTPase-activating activity of FLCN, leading to activation of mTORC1 and subsequent cytoplasmic retention of TFEB and TFE3. Indirectly acts as a positive regulator of Wnt signaling by promoting mTOR-dependent cytoplasmic retention of MiT/TFE factor TFE3. Required for the exit of hematopoietic stem cell from pluripotency by promoting mTOR-dependent cytoplasmic retention of TFE3, thereby increasing Wnt signaling. Acts as an inhibitor of browning of adipose tissue by regulating mTOR-dependent cytoplasmic retention of TFE3. Involved in the control of embryonic stem cells differentiation; together with LAMTOR1 it is necessary to recruit and activate RagC/RRAGC and RagD/RRAGD at the lysosomes, and to induce exit of embryonic stem cells from pluripotency via non-canonical, mTOR-independent TFE3 inactivation. In response to flow stress, regulates STK11/LKB1 accumulation and mTORC1 activation through primary cilia: may act by recruiting STK11/LKB1 to primary cilia for activation of AMPK resided at basal bodies, causing mTORC1 down-regulation. Together with FNIP1 and/or FNIP2, regulates autophagy: following phosphorylation by ULK1, interacts with GABARAP and promotes autophagy. Required for starvation-induced perinuclear clustering of lysosomes by promoting association of RILP with its effector RAB34. Regulates glycolysis by binding to lactate dehydrogenase LDHA, acting as an uncompetitive inhibitor. This chain is Folliculin, found in Homo sapiens (Human).